The following is a 203-amino-acid chain: Cilia- and flagella-associated protein 20 (203 aa).

Belongs to the CFAP20 family.

Its subcellular location is the nucleus. It localises to the cytoplasm. It is found in the cytoskeleton. The protein resides in the microtubule organizing center. The protein localises to the centrosome. Its subcellular location is the centriole. It localises to the cilium basal body. It is found in the cilium axoneme. Cilium- and flagellum-specific protein that plays a role in axonemal structure organization and motility. Microtubule inner protein (MIP) part of the dynein-decorated doublet microtubules (DMTs) in cilia axoneme, which is required for motile cilia beating. Involved in the regulation of the size and morphology of cilia. Required for axonemal microtubules polyglutamylation. The polypeptide is Cilia- and flagella-associated protein 20 (Caenorhabditis elegans).